We begin with the raw amino-acid sequence, 342 residues long: Serine/threonine-protein kinase-transforming protein mos (342 aa).

A Protein kinase domain is found at 63–338; sequence VCLMHRLGSG…LLQRDLKAFR (276 aa). ATP contacts are provided by residues 69–77 and Lys90; that span reads LGSGGFGSV. Asp198 serves as the catalytic Proton acceptor.

This sequence belongs to the protein kinase superfamily. Ser/Thr protein kinase family.

The catalysed reaction is L-seryl-[protein] + ATP = O-phospho-L-seryl-[protein] + ADP + H(+). It catalyses the reaction L-threonyl-[protein] + ATP = O-phospho-L-threonyl-[protein] + ADP + H(+). The polypeptide is Serine/threonine-protein kinase-transforming protein mos (V-MOS) (Myeloproliferative sarcoma virus (isolate ts159)).